The sequence spans 442 residues: Trigger factor (442 aa).

Residues 165–250 (DDTAQIDFEG…LHKILQKELP (86 aa)) form the PPIase FKBP-type domain.

The protein belongs to the FKBP-type PPIase family. Tig subfamily.

The protein resides in the cytoplasm. The catalysed reaction is [protein]-peptidylproline (omega=180) = [protein]-peptidylproline (omega=0). In terms of biological role, involved in protein export. Acts as a chaperone by maintaining the newly synthesized protein in an open conformation. Functions as a peptidyl-prolyl cis-trans isomerase. The chain is Trigger factor from Helicobacter hepaticus (strain ATCC 51449 / 3B1).